An 84-amino-acid chain; its full sequence is Sec-independent protein translocase protein TatA (84 aa).

The helical transmembrane segment at 1–21 (MGGLQPWHWLIVIAVFVLLFG) threads the bilayer. The disordered stretch occupies residues 46–84 (MQSDSNAAKSDQPEQITSERVVVDPSTQSTSSNSDKRPA). Residues 48–63 (SDSNAAKSDQPEQITS) show a composition bias toward polar residues.

Belongs to the TatA/E family. The Tat system comprises two distinct complexes: a TatABC complex, containing multiple copies of TatA, TatB and TatC subunits, and a separate TatA complex, containing only TatA subunits. Substrates initially bind to the TatABC complex, which probably triggers association of the separate TatA complex to form the active translocon.

It localises to the cell membrane. Part of the twin-arginine translocation (Tat) system that transports large folded proteins containing a characteristic twin-arginine motif in their signal peptide across membranes. TatA could form the protein-conducting channel of the Tat system. The protein is Sec-independent protein translocase protein TatA of Mycolicibacterium gilvum (strain PYR-GCK) (Mycobacterium gilvum (strain PYR-GCK)).